The primary structure comprises 508 residues: Cytochrome P450 monooxygenase orf4 (508 aa).

Residue Cys447 participates in heme binding.

The protein belongs to the cytochrome P450 family. Requires heme as cofactor.

Its pathway is mycotoxin biosynthesis. Functionally, cytochrome P450 monooxygenase; part of the gene cluster that mediates the biosynthesis of brefeldin A (BFA), a protein transport inhibitor that shows antiviral, antifungal, and antitumor properties. The proposed biosynthesis of BFA involves formation of an acyclic polyketide chain that is differentially tailored throughout the backbone. The highly reducing polyketide synthase Bref-PKS is proposed to synthesize the precisely reduced octaketide precursor, which could then be directly offloaded by the thiohydrolase enzyme Bref-TH followed by a cytochrome P450 monooxygenase-mediated formation of the cyclopentane ring and macrocyclization to afford 7-deoxy BFA. Alternatively, the first ring annulation can also occur on the ACP-tethered intermediate before the thiohydrolase release and lactonization. The C7-hydroxylation by another cytochrome P450 monooxygenase is believed to be the final step in the process to obtain the final structure of BFA. In addition to the HRPKS Bref-PKS and the thiohydrolase Bref-TH, the brefeldin A biosynthesis cluster contains 4 cytochrome p450 monooxygenases (called orf3 to orf6), as well a the probable cluster-specific transcription regulator orf8. The polypeptide is Cytochrome P450 monooxygenase orf4 (Eupenicillium brefeldianum (Penicillium brefeldianum)).